A 256-amino-acid chain; its full sequence is Tetraspanin-32 (256 aa).

Helical transmembrane passes span 15–35, 61–81, 90–110, and 203–223; these read LITN…VVVI, AFYV…LSTI, LMAA…QVAF, and CTSL…WFAI.

Belongs to the tetraspanin (TM4SF) family. In terms of tissue distribution, expressed exclusively in hematopoietic tissues. Expression detected in spleen, thymus, bone marrow and peripheral blood leukocytes but not in heart, brain, lung, liver, kidney or testis.

The protein localises to the membrane. This is Tetraspanin-32 (Tspan32) from Mus musculus (Mouse).